The chain runs to 203 residues: Large ribosomal subunit protein bL25 (203 aa).

It belongs to the bacterial ribosomal protein bL25 family. CTC subfamily. Part of the 50S ribosomal subunit; part of the 5S rRNA/L5/L18/L25 subcomplex. Contacts the 5S rRNA. Binds to the 5S rRNA independently of L5 and L18.

Its function is as follows. This is one of the proteins that binds to the 5S RNA in the ribosome where it forms part of the central protuberance. This is Large ribosomal subunit protein bL25 from Xanthobacter autotrophicus (strain ATCC BAA-1158 / Py2).